We begin with the raw amino-acid sequence, 220 residues long: Charged multivesicular body protein 5 (220 aa).

A compositionally biased stretch (basic residues) spans 1–10; that stretch reads MNRIFGRGKP. The segment at 1–27 is disordered; sequence MNRIFGRGKPKGPPPNLTDCISGVDSR. Coiled coils occupy residues 25 to 55 and 121 to 153; these read DSRA…MRDG and KNVK…SRSY. The tract at residues 178–206 is disordered; that stretch reads DDNSYLDEASSAPAIPEGAPGDRTTNRDG.

This sequence belongs to the SNF7 family. As to quaternary structure, probable peripherally associated component of the endosomal sorting required for transport complex III (ESCRT-III).

Its subcellular location is the cytoplasm. The protein resides in the cytosol. It is found in the endosome membrane. In terms of biological role, probable peripherally associated component of the endosomal sorting required for transport complex III (ESCRT-III) which is involved in multivesicular bodies (MVBs) formation and sorting of endosomal cargo proteins into MVBs. MVBs contain intraluminal vesicles (ILVs) that are generated by invagination and scission from the limiting membrane of the endosome and mostly are delivered to lysosomes enabling degradation of membrane proteins, such as stimulated growth factor receptors, lysosomal enzymes and lipids. The sequence is that of Charged multivesicular body protein 5 (chmp5) from Danio rerio (Zebrafish).